A 266-amino-acid polypeptide reads, in one-letter code: MRLVKPKKALGQHFLKDLQIAQRIADTLDTFKSLPVLEIGPGMGVLTQFLLEAGHDLTVVELDMESVDYLNQNFPDLKGRIIAEDFLKLDLSKLFPGQFCVIGNYPYNISSQIFFKVLDYKDQIPCCSGMLQKEVAERLAAGPGSKTYGILSVLLQAWYDVEYLFTVSEKVFDPPPKVKSAVLKMTRNDRKELGCDEKLFKTVVKTSFNQRRKTLRNSMKPLLGKDCPDYALPIFDKRPEQLSMEQFVELTLISQKHLEKQAGDVL.

Positions 13, 15, 40, 61, 85, and 104 each coordinate S-adenosyl-L-methionine.

The protein belongs to the class I-like SAM-binding methyltransferase superfamily. rRNA adenine N(6)-methyltransferase family. RsmA subfamily.

It localises to the cytoplasm. The catalysed reaction is adenosine(1518)/adenosine(1519) in 16S rRNA + 4 S-adenosyl-L-methionine = N(6)-dimethyladenosine(1518)/N(6)-dimethyladenosine(1519) in 16S rRNA + 4 S-adenosyl-L-homocysteine + 4 H(+). Specifically dimethylates two adjacent adenosines (A1518 and A1519) in the loop of a conserved hairpin near the 3'-end of 16S rRNA in the 30S particle. May play a critical role in biogenesis of 30S subunits. In Parabacteroides distasonis (strain ATCC 8503 / DSM 20701 / CIP 104284 / JCM 5825 / NCTC 11152), this protein is Ribosomal RNA small subunit methyltransferase A.